The following is a 122-amino-acid chain: Large ribosomal subunit protein uL14 (122 aa).

This sequence belongs to the universal ribosomal protein uL14 family. As to quaternary structure, part of the 50S ribosomal subunit. Forms a cluster with proteins L3 and L19. In the 70S ribosome, L14 and L19 interact and together make contacts with the 16S rRNA in bridges B5 and B8.

Its function is as follows. Binds to 23S rRNA. Forms part of two intersubunit bridges in the 70S ribosome. This chain is Large ribosomal subunit protein uL14, found in Borrelia turicatae (strain 91E135).